The chain runs to 387 residues: Succinate--CoA ligase [ADP-forming] subunit beta (387 aa).

The ATP-grasp domain maps to 9 to 244; the sequence is KRLLAEEGVP…STQQDGREIT (236 aa). Residues K46, 53–55, E99, S102, and E107 contribute to the ATP site; that span reads GRG. N199 and D213 together coordinate Mg(2+). Substrate contacts are provided by residues N264 and 321–323; that span reads GIT.

The protein belongs to the succinate/malate CoA ligase beta subunit family. Heterotetramer of two alpha and two beta subunits. It depends on Mg(2+) as a cofactor.

It catalyses the reaction succinate + ATP + CoA = succinyl-CoA + ADP + phosphate. It carries out the reaction GTP + succinate + CoA = succinyl-CoA + GDP + phosphate. It participates in carbohydrate metabolism; tricarboxylic acid cycle; succinate from succinyl-CoA (ligase route): step 1/1. Functionally, succinyl-CoA synthetase functions in the citric acid cycle (TCA), coupling the hydrolysis of succinyl-CoA to the synthesis of either ATP or GTP and thus represents the only step of substrate-level phosphorylation in the TCA. The beta subunit provides nucleotide specificity of the enzyme and binds the substrate succinate, while the binding sites for coenzyme A and phosphate are found in the alpha subunit. This chain is Succinate--CoA ligase [ADP-forming] subunit beta, found in Acidithiobacillus ferrooxidans (strain ATCC 23270 / DSM 14882 / CIP 104768 / NCIMB 8455) (Ferrobacillus ferrooxidans (strain ATCC 23270)).